Consider the following 198-residue polypeptide: Putative transposase InsO for insertion sequence element IS911B (198 aa).

In terms of domain architecture, Integrase catalytic spans 105 to 198; sequence AVTEPNQVWC…YCGDTGSGRV (94 aa).

In terms of biological role, involved in the transposition of the insertion sequence IS911B. The chain is Putative transposase InsO for insertion sequence element IS911B (insO2) from Escherichia coli (strain K12).